Consider the following 319-residue polypeptide: Ornithine carbamoyltransferase (319 aa).

Carbamoyl phosphate-binding positions include 55 to 58, Gln-82, Arg-106, and 133 to 136; these read STRT and HPCQ. Residues Asn-171, Asp-234, and 238–239 contribute to the L-ornithine site; that span reads SM. Residues 274-275 and Arg-302 contribute to the carbamoyl phosphate site; that span reads CL.

The protein belongs to the aspartate/ornithine carbamoyltransferase superfamily. OTCase family.

It is found in the cytoplasm. The catalysed reaction is carbamoyl phosphate + L-ornithine = L-citrulline + phosphate + H(+). The protein operates within amino-acid biosynthesis; L-arginine biosynthesis; L-arginine from L-ornithine and carbamoyl phosphate: step 1/3. Its function is as follows. Reversibly catalyzes the transfer of the carbamoyl group from carbamoyl phosphate (CP) to the N(epsilon) atom of ornithine (ORN) to produce L-citrulline. The protein is Ornithine carbamoyltransferase of Corynebacterium diphtheriae (strain ATCC 700971 / NCTC 13129 / Biotype gravis).